The primary structure comprises 373 residues: Putative glutamate--cysteine ligase 2 (373 aa).

It belongs to the glutamate--cysteine ligase type 2 family. YbdK subfamily. In terms of assembly, homodimer.

The catalysed reaction is L-cysteine + L-glutamate + ATP = gamma-L-glutamyl-L-cysteine + ADP + phosphate + H(+). In terms of biological role, ATP-dependent carboxylate-amine ligase which exhibits weak glutamate--cysteine ligase activity. The chain is Putative glutamate--cysteine ligase 2 from Enterobacter sp. (strain 638).